The sequence spans 136 residues: Small ribosomal subunit protein uS8c (136 aa).

It belongs to the universal ribosomal protein uS8 family. In terms of assembly, part of the 30S ribosomal subunit.

It localises to the plastid. The protein resides in the chloroplast. In terms of biological role, one of the primary rRNA binding proteins, it binds directly to 16S rRNA central domain where it helps coordinate assembly of the platform of the 30S subunit. In Morus indica (Mulberry), this protein is Small ribosomal subunit protein uS8c (rps8).